The chain runs to 190 residues: Transcription antitermination protein NusB (190 aa).

The disordered stretch occupies residues 158–190 (AGTSEDHVPQREPAAGQLGQDDSNGGQVAAVCR).

This sequence belongs to the NusB family.

Its function is as follows. Involved in transcription antitermination. Required for transcription of ribosomal RNA (rRNA) genes. Binds specifically to the boxA antiterminator sequence of the ribosomal RNA (rrn) operons. The chain is Transcription antitermination protein NusB from Mycobacterium leprae (strain TN).